The following is a 621-amino-acid chain: NADPH-dependent diflavin oxidoreductase 1 (621 aa).

Residues 6–168 (IAVLYGSETG…VYFEFEKRII (163 aa)) form the Flavodoxin-like domain. Residues 12-17 (SETGNA), 59-62 (STTG), 106-115 (LGDSSYPKFN), and Glu-142 each bind FMN. Residues 224 to 489 (KLIKTGTITL…VGPGVGLAPL (266 aa)) form the FAD-binding FR-type domain. Residues Arg-381, 411-414 (RLYS), and 443-446 (GVCT) contribute to the FAD site. Residues 536-537 (SR) and 545-549 (TKYVQ) contribute to the NADP(+) site. An FAD-binding site is contributed by Trp-621.

This sequence belongs to the NADPH-dependent diflavin oxidoreductase NDOR1 family. In the N-terminal section; belongs to the flavodoxin family. It in the C-terminal section; belongs to the flavoprotein pyridine nucleotide cytochrome reductase family. As to quaternary structure, interacts with DRE2; as part of the cytosolic iron-sulfur (Fe-S) protein assembly (CIA) machinery. FAD is required as a cofactor. It depends on FMN as a cofactor.

The protein resides in the cytoplasm. Its subcellular location is the mitochondrion. The catalysed reaction is 2 oxidized [2Fe-2S]-[protein] + NADPH = 2 reduced [2Fe-2S]-[protein] + NADP(+) + H(+). In terms of biological role, NADPH-dependent reductase which is a central component of the cytosolic iron-sulfur (Fe-S) protein assembly (CIA) machinery. Transfers electrons from NADPH via its FAD and FMN prosthetic groups to the [2Fe-2S] cluster of DRE2, another key component of the CIA machinery. In turn, this reduced cluster provides electrons for assembly of cytosolic iron-sulfur cluster proteins. Positively controls H(2)O(2)-induced cell death. The chain is NADPH-dependent diflavin oxidoreductase 1 from Candida glabrata (strain ATCC 2001 / BCRC 20586 / JCM 3761 / NBRC 0622 / NRRL Y-65 / CBS 138) (Yeast).